Reading from the N-terminus, the 300-residue chain is 4-hydroxy-tetrahydrodipicolinate synthase (300 aa).

Threonine 57 provides a ligand contact to pyruvate. The Proton donor/acceptor role is filled by tyrosine 145. Lysine 173 (schiff-base intermediate with substrate) is an active-site residue. Position 213 (isoleucine 213) interacts with pyruvate.

It belongs to the DapA family. In terms of assembly, homotetramer; dimer of dimers.

Its subcellular location is the cytoplasm. It catalyses the reaction L-aspartate 4-semialdehyde + pyruvate = (2S,4S)-4-hydroxy-2,3,4,5-tetrahydrodipicolinate + H2O + H(+). It participates in amino-acid biosynthesis; L-lysine biosynthesis via DAP pathway; (S)-tetrahydrodipicolinate from L-aspartate: step 3/4. In terms of biological role, catalyzes the condensation of (S)-aspartate-beta-semialdehyde [(S)-ASA] and pyruvate to 4-hydroxy-tetrahydrodipicolinate (HTPA). The chain is 4-hydroxy-tetrahydrodipicolinate synthase from Corynebacterium jeikeium (strain K411).